We begin with the raw amino-acid sequence, 379 residues long: Sialidase-2 (379 aa).

Positions 20-23 (YRIP) match the FRIP motif motif. Arg21 and Arg41 together coordinate substrate. Asp46 serves as the catalytic Proton acceptor. A BNR 1 repeat occupies 127–138 (VTSTDYGMNWSP). The substrate site is built by Tyr179 and Tyr181. Residues 197–208 (FISLDHGHTWEL) form a BNR 2 repeat. The substrate site is built by Glu218, Arg237, and Arg303. Tyr333 serves as the catalytic Nucleophile. Glu354 is a catalytic residue.

Belongs to the glycosyl hydrolase 33 family. As to expression, detected in skeletal muscle.

Its subcellular location is the cytoplasm. It is found in the cytosol. The catalysed reaction is Hydrolysis of alpha-(2-&gt;3)-, alpha-(2-&gt;6)-, alpha-(2-&gt;8)- glycosidic linkages of terminal sialic acid residues in oligosaccharides, glycoproteins, glycolipids, colominic acid and synthetic substrates.. It carries out the reaction a ganglioside GD1a + H2O = a ganglioside GM1 + N-acetylneuraminate. It catalyses the reaction a ganglioside GM1 + H2O = a ganglioside GA1 + N-acetylneuraminate. The enzyme catalyses a ganglioside GT1b + H2O = a ganglioside GD1b + N-acetylneuraminate. The catalysed reaction is a ganglioside GD1b + H2O = a ganglioside GM1 + N-acetylneuraminate. It carries out the reaction a ganglioside GD3 + H2O = a ganglioside GM3 + N-acetylneuraminate. It catalyses the reaction a ganglioside GM3 + H2O = a beta-D-galactosyl-(1-&gt;4)-beta-D-glucosyl-(1&lt;-&gt;1)-ceramide + N-acetylneuraminate. The enzyme catalyses a ganglioside GM2 + H2O = a ganglioside GA2 + N-acetylneuraminate. The catalysed reaction is a neolactoside IV(3)-alpha-NeuAc-nLc4Cer(d18:1(4E)) + H2O = a neolactoside nLc4Cer(d18:1(4E)) + N-acetylneuraminate. It carries out the reaction N-acetyl-alpha-neuraminosyl-(2-&gt;3)-beta-D-galactosyl-(1-&gt;4)-D-glucose + H2O = lactose + N-acetylneuraminate. Its function is as follows. Exo-alpha-sialidase that catalyzes the hydrolytic cleavage of the terminal sialic acid (N-acetylneuraminic acid, Neu5Ac) of a glycan moiety in the catabolism of glycolipids, glycoproteins and oligosacharides. Recognizes sialyl linkage positions of the glycan moiety as well as the supramolecular organization of the sialoglycoconjugate. Displays preference for alpha-(2-&gt;3)-sialylated GD1a and GT1B gangliosides over alpha-(2-&gt;8)-sialylated GD1b, in both monomeric forms and micelles. Hydrolyzes monomeric GM1 ganglioside, but has no activity toward the miscellar form. Has lower sialidase activity for glycoproteins such as fetuin and TF/transferrin that carry a mixture of alpha-(2-&gt;3) and alpha-(2-&gt;6)-sialyl linkages. Cleaves milk oligosaccharide alpha-(2-&gt;3)-sialyllactose, but is inactive toward alpha-(2-&gt;6)-sialyllactose isomer. Has no activity toward colominic acid, a homomer of alpha-(2-&gt;8)-linked Neu5Ac residues. The sequence is that of Sialidase-2 (Neu2) from Rattus norvegicus (Rat).